Reading from the N-terminus, the 338-residue chain is Thiosulfate-binding protein (338 aa).

An N-terminal signal peptide occupies residues 1 to 25 (MAVNLLKKNSLALVASLLLAGHVQA).

It belongs to the prokaryotic sulfate-binding protein family. As to quaternary structure, the complex is composed of two ATP-binding proteins (CysA), two transmembrane proteins (CysT and CysW) and a solute-binding protein (CysP).

The protein localises to the periplasm. In terms of biological role, part of the ABC transporter complex CysAWTP (TC 3.A.1.6.1) involved in sulfate/thiosulfate import. This protein specifically binds thiosulfate and is involved in its transmembrane transport. The protein is Thiosulfate-binding protein (cysP) of Escherichia coli (strain K12).